The sequence spans 893 residues: Probable ion channel CASTOR (893 aa).

Residues 1 to 94 form a disordered region; that stretch reads MPLDPDSSPA…APRRRDPRYA (94 aa). A compositionally biased stretch (pro residues) spans 65-85; it reads PLPPPEQQKQQQPPPTTPPPA. A helical membrane pass occupies residues 132–152; that stretch reads TLRWSGMVSVAAIVLCFSSLV. Positions 156–178 form a coiled coil; it reads SSLHDQVHHLKAQLAEATTKLQS. Transmembrane regions (helical) follow at residues 210–230, 266–286, and 318–338; these read LLLSLSTLYAPLLILKYMDLF, LVLLVATLLLIGLGGLALYGV, and LVSVSISIGGMLVFAMMLGLV. RCK N-terminal domains lie at 359 to 500 and 619 to 792; these read QSHT…ETVV and PERI…DYVL. The stretch at 389 to 415 forms a coiled coil; it reads TIVVMAEKDKEEMEADIAKMEFDLKGT.

Belongs to the castor/pollux (TC 1.A.1.23) family. Expressed in roots, leaves, stems and panicles.

The protein localises to the nucleus membrane. In terms of biological role, required for mycorrhizal symbiosis. This chain is Probable ion channel CASTOR, found in Oryza sativa subsp. japonica (Rice).